Here is a 393-residue protein sequence, read N- to C-terminus: Na(+)/H(+) antiporter NhaA (393 aa).

The next 12 helical transmembrane spans lie at 23-43 (AGGITLMAAAALALIVANSPF), 58-78 (LSLAHWINDALMAKFFLLVGL), 96-116 (MLPGIAAAGGVILPAIIFAVL), 126-146 (GWAVPSATDIAFALGVLSLLG), 155-175 (VFLATLAILDDLAAVVIIAIF), 178-198 (AEISMPYLGAAFITAAVLFVM), 201-221 (MGVVKLLPYLISAVILWFFVF), 224-244 (GVHATVAGVVAALMIPLKPAP), 265-285 (VAFIVVPIFGFANAGISFKGL), 298-318 (ILLGLFLGKQFGVFGAAWLAI), 334-354 (LYGVAILCGIGFTMSIFIGLL), and 367-387 (IGVLSGSALSAICGYLLLRAA).

The protein belongs to the NhaA Na(+)/H(+) (TC 2.A.33) antiporter family.

Its subcellular location is the cell inner membrane. It carries out the reaction Na(+)(in) + 2 H(+)(out) = Na(+)(out) + 2 H(+)(in). Na(+)/H(+) antiporter that extrudes sodium in exchange for external protons. The sequence is that of Na(+)/H(+) antiporter NhaA from Brucella suis (strain ATCC 23445 / NCTC 10510).